The sequence spans 268 residues: Cytolethal distending toxin subunit A (268 aa).

Positions methionine 1–alanine 19 are cleaved as a signal peptide. Residue cysteine 20 is the site of N-palmitoyl cysteine attachment. Residue cysteine 20 is the site of S-diacylglycerol cysteine attachment. A Ricin B-type lectin domain is found at valine 112–threonine 252. The segment at tryptophan 129 to tyrosine 140 is mediates binding to target cells.

In terms of assembly, heterotrimer of 3 subunits, CdtA, CdtB and CdtC.

The protein localises to the cell outer membrane. Functionally, CDTs are cytotoxins which induce cell distension, growth arrest in G2/M phase, nucleus swelling, and chromatin fragmentation in HeLa cells. The polypeptide is Cytolethal distending toxin subunit A (cdtA) (Campylobacter jejuni subsp. jejuni serotype O:2 (strain ATCC 700819 / NCTC 11168)).